We begin with the raw amino-acid sequence, 379 residues long: Cinnamyl alcohol dehydrogenase 7 (379 aa).

Positions 1–13 are enriched in low complexity; that stretch reads MAPTTTATAAAEQ. Positions 1–21 are disordered; the sequence is MAPTTTATAAAEQAPPPQHTR. C60 is a Zn(2+) binding site. S62 lines the NADP(+) pocket. Zn(2+) is bound by residues H82, E83, C113, C116, C119, C127, and C185. Residues T189, 210-215, 233-238, T273, G297, and 320-322 each bind NADP(+); these read GLGGLG, STSPVK, and SCM.

Belongs to the zinc-containing alcohol dehydrogenase family. Homodimer. It depends on Zn(2+) as a cofactor. Expressed in roots, first internodes and panicles. Expressed in the vascular bundles and sclerenchyma cells below the epidermis in leaves and stems.

The enzyme catalyses (E)-cinnamyl alcohol + NADP(+) = (E)-cinnamaldehyde + NADPH + H(+). The catalysed reaction is (E)-coniferol + NADP(+) = (E)-coniferaldehyde + NADPH + H(+). It catalyses the reaction (E)-sinapyl alcohol + NADP(+) = (E)-sinapaldehyde + NADPH + H(+). It carries out the reaction (E)-4-coumaroyl alcohol + NADP(+) = (E)-4-coumaraldehyde + NADPH + H(+). The enzyme catalyses (E)-caffeyl alcohol + NADP(+) = (E)-caffeyl aldehyde + NADPH + H(+). It participates in aromatic compound metabolism; phenylpropanoid biosynthesis. Functionally, involved in lignin biosynthesis. May catalyze the final step specific for the production of lignin monomers, like coniferyl alcohol, sinapyl alcohol and 4-coumaryl alcohol. This is Cinnamyl alcohol dehydrogenase 7 from Oryza sativa subsp. japonica (Rice).